Reading from the N-terminus, the 83-residue chain is UPF0297 protein CKR_1221 (83 aa).

This sequence belongs to the UPF0297 family.

The protein is UPF0297 protein CKR_1221 of Clostridium kluyveri (strain NBRC 12016).